The sequence spans 201 residues: dITP/XTP pyrophosphatase (201 aa).

8 to 13 (TTNENK) lines the substrate pocket. Asp68 acts as the Proton acceptor in catalysis. Residue Asp68 participates in Mg(2+) binding. Substrate contacts are provided by residues Ser69, 155 to 158 (FGYD), Lys177, and 182 to 183 (HR).

The protein belongs to the HAM1 NTPase family. In terms of assembly, homodimer. Mg(2+) is required as a cofactor.

The catalysed reaction is XTP + H2O = XMP + diphosphate + H(+). The enzyme catalyses dITP + H2O = dIMP + diphosphate + H(+). It carries out the reaction ITP + H2O = IMP + diphosphate + H(+). Pyrophosphatase that catalyzes the hydrolysis of nucleoside triphosphates to their monophosphate derivatives, with a high preference for the non-canonical purine nucleotides XTP (xanthosine triphosphate), dITP (deoxyinosine triphosphate) and ITP. Seems to function as a house-cleaning enzyme that removes non-canonical purine nucleotides from the nucleotide pool, thus preventing their incorporation into DNA/RNA and avoiding chromosomal lesions. In Borrelia garinii subsp. bavariensis (strain ATCC BAA-2496 / DSM 23469 / PBi) (Borreliella bavariensis), this protein is dITP/XTP pyrophosphatase.